A 648-amino-acid polypeptide reads, in one-letter code: MTPLLELKDIRRSYPAGDEQVEVLKGISLDIYAGEMVAIVGASGSGKSTLMNILGCLDKATSGTYRVAGQDVATLDADALAQLRREHFGFIFQRYHLLSHLTAEQNVEVPAVYAGLERKQRLLRAQELLQRLGLEDRTEYYPAQLSGGQQQRVSIARALMNGGQVILADEPTGALDSHSGEEVMAILHQLRDRGHTVIIVTHDPQVAAQAERVIEIRDGEIVRNPPAVEKVNATGGTEPVVNTASGWRQFVSGFNEALTMAWRALAANKMRTLLTMLGIIIGIASVVSIVVVGDAAKQMVLADIRSIGTNTIDVYPGNDFGDDDPQYQQALKYDDLIAIQKQPWVASATPAVSQNLRLRYNNVDVAASANGVSGDYFNVYGMTFSEGNTFNQEQLNGRAQVVVLDSNTRRQLFPHKADVVGEVILVGNMPARVIGVAEEKQSMFGSSKVLRVWLPYSTMSGRVMGQSWLNSITVRVKEGFDSAEAEQQLTRLLSLRHGKKDFFTWNMDGVLKTVEKTTRTLQLFLTLVAVISLVVGGIGVMNIMLVSVTERTREIGIRMAVGARASDVLQQFLIEAVLVCLVGGALGITLSLLIAFTLQLFLPGWEIGFSPLALLLAFLCSTVTGILFGWLPARNAARLDPVDALARE.

One can recognise an ABC transporter domain in the interval 5–243 (LELKDIRRSY…TGGTEPVVNT (239 aa)). Residue 41–48 (GASGSGKS) coordinates ATP. The next 4 membrane-spanning stretches (helical) occupy residues 273–293 (LLTM…VVVG), 523–543 (LFLT…VMNI), 576–596 (AVLV…LIAF), and 611–631 (PLAL…FGWL).

Belongs to the ABC transporter superfamily. Macrolide exporter (TC 3.A.1.122) family. In terms of assembly, homodimer. Part of the tripartite efflux system MacAB-TolC, which is composed of an inner membrane transporter, MacB, a periplasmic membrane fusion protein, MacA, and an outer membrane component, TolC. The complex forms a large protein conduit and can translocate molecules across both the inner and outer membranes. Interacts with MacA.

The protein resides in the cell inner membrane. Functionally, part of the tripartite efflux system MacAB-TolC. MacB is a non-canonical ABC transporter that contains transmembrane domains (TMD), which form a pore in the inner membrane, and an ATP-binding domain (NBD), which is responsible for energy generation. Confers resistance against macrolides. In Escherichia coli O6:K15:H31 (strain 536 / UPEC), this protein is Macrolide export ATP-binding/permease protein MacB.